Reading from the N-terminus, the 286-residue chain is P2R1A-PPP2R2A-interacting phosphatase regulator 1 (286 aa).

A disordered region spans residues 1–46 (MAQEKMELDLELPAGTGASPAEGGGPGSGGLRRSNSAPLIHGLSDS). Ser34 is modified (phosphoserine). Ser36 bears the Phosphoserine; by CHEK1 mark. Residues Ser44, Ser47, Ser61, and Ser75 each carry the phosphoserine modification. Lys88 is covalently cross-linked (Glycyl lysine isopeptide (Lys-Gly) (interchain with G-Cter in SUMO1)). Phosphoserine occurs at positions 142 and 146. A Phosphothreonine modification is found at Thr148. The segment at 166–187 (SNGLPPSPIPSPTTRFTTRRSQ) is disordered. The segment covering 177 to 187 (PTTRFTTRRSQ) has biased composition (low complexity). Phosphoserine occurs at positions 186 and 188. The interval 238-286 (VSSDTLDGNSSSAGSSCNSPAKVSTTTDSPVSPAQAASPFIPVDELSSK) is disordered. Residues 245–256 (GNSSSAGSSCNS) show a composition bias toward low complexity. Over residues 258-269 (AKVSTTTDSPVS) the composition is skewed to polar residues. Phosphoserine is present on residues Ser266, Ser269, and Ser275.

This sequence belongs to the FAM122 family. Interacts with PPP2CA and PPP2R1A. Interacts (via its N-terminus) with PPP2R2A; the interaction is direct and this interaction inhibits PP2A activity. The CHEK1-mediated Ser-36 phosphorylated form interacts with 14-3-3 proteins. CHEK1-mediated phosphorylation at Ser-36 negatively regulates its ability to inhibit serine/threonine-protein phosphatase 2A (PP2A) activity. Phosphorylation leads to its release from the PP2A complex and its sequestration by 14-3-3 proteins in the cytoplasm resulting in its inability to translocate to the nucleus, where it otherwise inhibits PP2A.

The protein resides in the nucleus. It localises to the cytoplasm. Acts as an inhibitor of serine/threonine-protein phosphatase 2A (PP2A) activity. Inhibits PP2A activity by blocking the substrate binding site on PPP2R2A and the active site of PPP2CA. Potentiates ubiquitin-mediated proteasomal degradation of serine/threonine-protein phosphatase 2A catalytic subunit alpha (PPP2CA). Inhibits PP2A-mediated dephosphorylation of WEE1, promoting ubiquitin-mediated proteolysis of WEE1, thereby releasing G2/M checkpoint. In Rattus norvegicus (Rat), this protein is P2R1A-PPP2R2A-interacting phosphatase regulator 1.